A 428-amino-acid polypeptide reads, in one-letter code: Flap endonuclease 1-B (428 aa).

An N-domain region spans residues 1 to 132 (MGIKGLTKVL…KELAKRSLKR (132 aa)). Asp-34 lines the Mg(2+) pocket. Arg-98 serves as a coordination point for DNA. Residues Asp-114, Glu-186, Glu-188, Asp-207, and Asp-209 each contribute to the Mg(2+) site. Residues 150–281 (AVEKFSKRTV…QRALKLIRQH (132 aa)) form an I-domain region. DNA is bound at residue Glu-186. Gly-259 and Asp-261 together coordinate DNA. Asp-261 provides a ligand contact to Mg(2+).

Belongs to the XPG/RAD2 endonuclease family. FEN1 subfamily. In terms of assembly, interacts with PCNA. Three molecules of FEN1 bind to one PCNA trimer with each molecule binding to one PCNA monomer. PCNA stimulates the nuclease activity without altering cleavage specificity. Mg(2+) is required as a cofactor. Phosphorylated. Phosphorylation upon DNA damage induces relocalization to the nuclear plasma.

It localises to the nucleus. The protein resides in the nucleolus. Its subcellular location is the nucleoplasm. The protein localises to the mitochondrion. In terms of biological role, structure-specific nuclease with 5'-flap endonuclease and 5'-3' exonuclease activities involved in DNA replication and repair. During DNA replication, cleaves the 5'-overhanging flap structure that is generated by displacement synthesis when DNA polymerase encounters the 5'-end of a downstream Okazaki fragment. It enters the flap from the 5'-end and then tracks to cleave the flap base, leaving a nick for ligation. Also involved in the long patch base excision repair (LP-BER) pathway, by cleaving within the apurinic/apyrimidinic (AP) site-terminated flap. Acts as a genome stabilization factor that prevents flaps from equilibrating into structures that lead to duplications and deletions. Also possesses 5'-3' exonuclease activity on nicked or gapped double-stranded DNA, and exhibits RNase H activity. Also involved in replication and repair of rDNA and in repairing mitochondrial DNA. In Sorghum bicolor (Sorghum), this protein is Flap endonuclease 1-B.